A 495-amino-acid polypeptide reads, in one-letter code: Lysine--tRNA ligase (495 aa).

Mg(2+)-binding residues include Glu406 and Glu413.

It belongs to the class-II aminoacyl-tRNA synthetase family. As to quaternary structure, homodimer. It depends on Mg(2+) as a cofactor.

The protein resides in the cytoplasm. The catalysed reaction is tRNA(Lys) + L-lysine + ATP = L-lysyl-tRNA(Lys) + AMP + diphosphate. This Leptospira interrogans serogroup Icterohaemorrhagiae serovar Lai (strain 56601) protein is Lysine--tRNA ligase.